A 119-amino-acid chain; its full sequence is Protein RALF-like 22 (119 aa).

Positions 1-23 (MTNTRAIYAVIAILAIVISAVES) are cleaved as a signal peptide. Residues 24-70 (TGDFGDSLDFVRAGSSSLFSGCTGSIAECIAEEEEMEFDSDISRRIL) constitute a propeptide, removed in mature form. Cystine bridges form between Cys-88/Cys-98 and Cys-111/Cys-117.

The protein belongs to the plant rapid alkalinization factor (RALF) family. Proteolytically cleaved, probably by S1P, a subtilisin-like serine protease (subtilase).

The protein localises to the secreted. In terms of biological role, cell signaling peptide that may regulate plant stress, growth, and development. Mediates a rapid alkalinization of extracellular space by mediating a transient increase in the cytoplasmic Ca(2+) concentration leading to a calcium-dependent signaling events through a cell surface receptor and a concomitant activation of some intracellular mitogen-activated protein kinases. This is Protein RALF-like 22 (RALFL22) from Arabidopsis thaliana (Mouse-ear cress).